Here is a 201-residue protein sequence, read N- to C-terminus: Small ribosomal subunit protein uS4 (201 aa).

The segment at 1–42 is disordered; it reads MARYTGPVTRKSRRLGTDLVGGDQSFEKRPYPPGQHGRARIK. One can recognise an S4 RNA-binding domain in the interval 91–157; sequence SRLDNVVYRA…VPFQIARETA (67 aa).

It belongs to the universal ribosomal protein uS4 family. Part of the 30S ribosomal subunit. Contacts protein S5. The interaction surface between S4 and S5 is involved in control of translational fidelity.

In terms of biological role, one of the primary rRNA binding proteins, it binds directly to 16S rRNA where it nucleates assembly of the body of the 30S subunit. With S5 and S12 plays an important role in translational accuracy. This chain is Small ribosomal subunit protein uS4, found in Mycobacterium marinum (strain ATCC BAA-535 / M).